Consider the following 1849-residue polypeptide: Brefeldin A-inhibited guanine nucleotide-exchange protein 1 (1849 aa).

The interval 2–224 (YEGKKTKNMF…QEAKQMEKER (223 aa)) is DCB; DCB:DCB and DCB:HUS domain interaction. The span at 46–58 (AETEKQSPPHGEA) shows a compositional bias: basic and acidic residues. Disordered regions lie at residues 46-65 (AETEKQSPPHGEAKAGSSTL), 216-301 (EAKQ…ADQA), and 350-413 (INVS…SPGA). Residues serine 52, serine 286, serine 289, and serine 290 each carry the phosphoserine modification. Composition is skewed to polar residues over residues 350–360 (INVSADGNNGT) and 394–409 (SVSSNDTQESGNSSGP). Serine 397 and serine 410 each carry phosphoserine. Positions 557-577 (ADAQSVVDIYVNYDCDLNAAN) are HUS; DCB:HUS domain interaction. The segment at 634 to 687 (PNSQTTLGQEKPSEQETSEMKHPETINRYGSLNSLESTSSSGIGSYSTQMSGTD) is disordered. Positions 644-658 (KPSEQETSEMKHPET) are enriched in basic and acidic residues. Residues 664-684 (SLNSLESTSSSGIGSYSTQMS) show a composition bias toward low complexity. An SEC7 domain is found at 709 to 840 (FTKKPKRGIQ…IIMLTTDLHS (132 aa)). The Nuclear localization signal (NLS) motif lies at 711 to 715 (KKPKR). Serine 1079, serine 1566, and serine 1569 each carry phosphoserine.

In terms of assembly, homodimer. Interacts with ARFGEF2/BIG2; both proteins are probably part of the same or very similar macromolecular complexes. Interacts with FKBP2. Interacts with MYO9B. Interacts with PRKAR1A and PRKAR2A. Interacts with PPP1CC. Interacts with NCL, FBL, NUP62 and U3 small nucleolar RNA. Interacts with DPY30. Interacts with PDE3A. Interacts with KANK1. Interacts with TBC1D22A and TBC1D22B. In terms of processing, phosphorylated. In vitro phosphorylated by PKA reducing its GEF activity and dephosphorylated by phosphatase PP1. Abundantly expressed in kidney, somewhat less abundant in lung, spleen, and brain, and still less abundant in heart.

It is found in the cytoplasm. The protein localises to the perinuclear region. Its subcellular location is the golgi apparatus. It localises to the trans-Golgi network. The protein resides in the nucleus. It is found in the nucleolus. The protein localises to the nucleus matrix. Its subcellular location is the membrane. Its activity is regulated as follows. Inhibited by brefeldin A. Promotes guanine-nucleotide exchange on ARF1 and ARF3. Promotes the activation of ARF1/ARF3 through replacement of GDP with GTP. Involved in vesicular trafficking. Required for the maintenance of Golgi structure; the function may be independent of its GEF activity. Required for the maturation of integrin beta-1 in the Golgi. Involved in the establishment and persistence of cell polarity during directed cell movement in wound healing. Proposed to act as A kinase-anchoring protein (AKAP) and may mediate crosstalk between Arf and PKA pathways. Inhibits GAP activity of MYO9B probably through competitive RhoA binding. The function in the nucleus remains to be determined. The protein is Brefeldin A-inhibited guanine nucleotide-exchange protein 1 (ARFGEF1) of Bos taurus (Bovine).